Here is a 250-residue protein sequence, read N- to C-terminus: Cell division protein ZapD (250 aa).

Belongs to the ZapD family. In terms of assembly, interacts with FtsZ.

The protein resides in the cytoplasm. Its function is as follows. Cell division factor that enhances FtsZ-ring assembly. Directly interacts with FtsZ and promotes bundling of FtsZ protofilaments, with a reduction in FtsZ GTPase activity. The polypeptide is Cell division protein ZapD (Serratia proteamaculans (strain 568)).